Reading from the N-terminus, the 468-residue chain is Soluble pyridine nucleotide transhydrogenase (468 aa).

Residue 36–45 participates in FAD binding; sequence ERYKNVGGGC.

The protein belongs to the class-I pyridine nucleotide-disulfide oxidoreductase family. FAD serves as cofactor.

The protein resides in the cytoplasm. It catalyses the reaction NAD(+) + NADPH = NADH + NADP(+). Its function is as follows. Conversion of NADPH, generated by peripheral catabolic pathways, to NADH, which can enter the respiratory chain for energy generation. The sequence is that of Soluble pyridine nucleotide transhydrogenase from Hamiltonella defensa subsp. Acyrthosiphon pisum (strain 5AT).